The following is a 113-amino-acid chain: Protein USP2 (113 aa).

Positions 1–18 (MKITMFFAALSAASGVFA) are cleaved as a signal peptide. Tandem repeats lie at residues 32-37 (IGAGVG), 40-45 (IGAGVG), 46-49 (SYGY), 50-53 (PYGA), 59-65 (LQLLPLR), and 69-75 (LRRLPLR). The interval 32 to 45 (IGAGVGIGIGAGVG) is 2 X 6 AA repeats. Residues 46–53 (SYGYPYGA) form a 2 X 4 AA approximate tandem repeats region. The 2 X 7 AA approximate repeats stretch occupies residues 59 to 75 (LQLLPLRWLPLRRLPLR).

The protein resides in the secreted. This Puccinia graminis (Black stem rust fungus) protein is Protein USP2 (USP2).